A 347-amino-acid chain; its full sequence is Heat-inducible transcription repressor HrcA (347 aa).

It belongs to the HrcA family.

In terms of biological role, negative regulator of class I heat shock genes (grpE-dnaK-dnaJ and groELS operons). Prevents heat-shock induction of these operons. In Sphingopyxis alaskensis (strain DSM 13593 / LMG 18877 / RB2256) (Sphingomonas alaskensis), this protein is Heat-inducible transcription repressor HrcA.